The sequence spans 224 residues: ATP-dependent dethiobiotin synthetase BioD (224 aa).

13–18 (NVGKTI) contacts ATP. Position 17 (T17) interacts with Mg(2+). K38 is a catalytic residue. S42 contacts substrate. ATP-binding positions include D55, 116 to 119 (EGAG), 176 to 177 (NN), and N211. The Mg(2+) site is built by D55 and E116.

It belongs to the dethiobiotin synthetase family. As to quaternary structure, homodimer. Requires Mg(2+) as cofactor.

Its subcellular location is the cytoplasm. The enzyme catalyses (7R,8S)-7,8-diammoniononanoate + CO2 + ATP = (4R,5S)-dethiobiotin + ADP + phosphate + 3 H(+). Its pathway is cofactor biosynthesis; biotin biosynthesis; biotin from 7,8-diaminononanoate: step 1/2. Catalyzes a mechanistically unusual reaction, the ATP-dependent insertion of CO2 between the N7 and N8 nitrogen atoms of 7,8-diaminopelargonic acid (DAPA, also called 7,8-diammoniononanoate) to form a ureido ring. This is ATP-dependent dethiobiotin synthetase BioD from Buchnera aphidicola subsp. Acyrthosiphon pisum (strain APS) (Acyrthosiphon pisum symbiotic bacterium).